The primary structure comprises 156 residues: Small ribosomal subunit protein uS7 (156 aa).

Belongs to the universal ribosomal protein uS7 family. In terms of assembly, part of the 30S ribosomal subunit. Contacts proteins S9 and S11.

In terms of biological role, one of the primary rRNA binding proteins, it binds directly to 16S rRNA where it nucleates assembly of the head domain of the 30S subunit. Is located at the subunit interface close to the decoding center, probably blocks exit of the E-site tRNA. In Bifidobacterium longum subsp. infantis (strain ATCC 15697 / DSM 20088 / JCM 1222 / NCTC 11817 / S12), this protein is Small ribosomal subunit protein uS7.